The primary structure comprises 99 residues: Small ribosomal subunit protein bS6c (99 aa).

This sequence belongs to the bacterial ribosomal protein bS6 family.

It is found in the plastid. It localises to the chloroplast. Binds together with bS18 to 16S ribosomal RNA. The sequence is that of Small ribosomal subunit protein bS6c from Cyanidioschyzon merolae (strain NIES-3377 / 10D) (Unicellular red alga).